The chain runs to 366 residues: Chorismate synthase (366 aa).

Residues arginine 48 and arginine 54 each coordinate NADP(+). FMN-binding positions include 125–127, 238–239, glycine 278, 293–297, and arginine 319; these read RSS, NA, and KPTSS.

Belongs to the chorismate synthase family. In terms of assembly, homotetramer. FMNH2 is required as a cofactor.

It carries out the reaction 5-O-(1-carboxyvinyl)-3-phosphoshikimate = chorismate + phosphate. Its pathway is metabolic intermediate biosynthesis; chorismate biosynthesis; chorismate from D-erythrose 4-phosphate and phosphoenolpyruvate: step 7/7. In terms of biological role, catalyzes the anti-1,4-elimination of the C-3 phosphate and the C-6 proR hydrogen from 5-enolpyruvylshikimate-3-phosphate (EPSP) to yield chorismate, which is the branch point compound that serves as the starting substrate for the three terminal pathways of aromatic amino acid biosynthesis. This reaction introduces a second double bond into the aromatic ring system. In Burkholderia ambifaria (strain ATCC BAA-244 / DSM 16087 / CCUG 44356 / LMG 19182 / AMMD) (Burkholderia cepacia (strain AMMD)), this protein is Chorismate synthase.